We begin with the raw amino-acid sequence, 237 residues long: Phosphoribosylaminoimidazole-succinocarboxamide synthase (237 aa).

The protein belongs to the SAICAR synthetase family.

It carries out the reaction 5-amino-1-(5-phospho-D-ribosyl)imidazole-4-carboxylate + L-aspartate + ATP = (2S)-2-[5-amino-1-(5-phospho-beta-D-ribosyl)imidazole-4-carboxamido]succinate + ADP + phosphate + 2 H(+). It functions in the pathway purine metabolism; IMP biosynthesis via de novo pathway; 5-amino-1-(5-phospho-D-ribosyl)imidazole-4-carboxamide from 5-amino-1-(5-phospho-D-ribosyl)imidazole-4-carboxylate: step 1/2. The protein is Phosphoribosylaminoimidazole-succinocarboxamide synthase of Edwardsiella ictaluri (strain 93-146).